A 463-amino-acid polypeptide reads, in one-letter code: Interstitial collagenase B (463 aa).

An N-terminal signal peptide occupies residues 1–17 (MPSLPLLLRLWAASSYS). A propeptide spans 18 to 96 (FPVIQDGLQK…PRCGVPDVAP (79 aa)) (activation peptide). Residues 87–94 (PRCGVPDV) carry the Cysteine switch motif. Zn(2+) is bound at residue Cys-89. The tract at residues 95–273 (APYAITHNNP…PIQLTDATLD (179 aa)) is metalloprotease. A Ca(2+)-binding site is contributed by Asp-155. Zn(2+)-binding residues include His-165 and Asp-167. Ca(2+)-binding residues include Asp-172 and Gly-173. His-180 is a binding site for Zn(2+). Ca(2+) is bound by residues Gly-187 and Gly-189. Residue His-193 coordinates Zn(2+). Asp-195 provides a ligand contact to Ca(2+). His-215 provides a ligand contact to Zn(2+). Glu-216 is a catalytic residue. Positions 219 and 225 each coordinate Zn(2+). A disulfide bridge links Cys-275 with Cys-463. 2 Hemopexin repeats span residues 278–321 (GLTF…WPNL) and 322–368 (PGKF…FGFP). Asp-282 is a binding site for Ca(2+). Asn-370 carries N-linked (GlcNAc...) asparagine glycosylation. Hemopexin repeat units follow at residues 371 to 419 (VTNI…FPGI) and 420 to 463 (DYKV…WFNC). Asp-375 and Asp-424 together coordinate Ca(2+).

The protein belongs to the peptidase M10A family. Ca(2+) serves as cofactor. It depends on Zn(2+) as a cofactor.

It is found in the secreted. The protein resides in the extracellular space. Its subcellular location is the extracellular matrix. It carries out the reaction Cleavage of the triple helix of collagen at about three-quarters of the length of the molecule from the N-terminus, at 775-Gly-|-Ile-776 in the alpha1(I) chain. Cleaves synthetic substrates and alpha-macroglobulins at bonds where P1' is a hydrophobic residue.. Its activity is regulated as follows. Can be activated without removal of the activation peptide. In Mus musculus (Mouse), this protein is Interstitial collagenase B (Mmp1b).